The chain runs to 310 residues: Aspartate carbamoyltransferase catalytic subunit (310 aa).

Arg-55 and Thr-56 together coordinate carbamoyl phosphate. Residue Lys-83 coordinates L-aspartate. Carbamoyl phosphate contacts are provided by Arg-105, His-136, and Gln-139. Residues Arg-169 and Arg-223 each coordinate L-aspartate. Carbamoyl phosphate is bound by residues Gly-264 and Pro-265.

This sequence belongs to the aspartate/ornithine carbamoyltransferase superfamily. ATCase family. As to quaternary structure, heterododecamer (2C3:3R2) of six catalytic PyrB chains organized as two trimers (C3), and six regulatory PyrI chains organized as three dimers (R2).

It catalyses the reaction carbamoyl phosphate + L-aspartate = N-carbamoyl-L-aspartate + phosphate + H(+). It functions in the pathway pyrimidine metabolism; UMP biosynthesis via de novo pathway; (S)-dihydroorotate from bicarbonate: step 2/3. Its function is as follows. Catalyzes the condensation of carbamoyl phosphate and aspartate to form carbamoyl aspartate and inorganic phosphate, the committed step in the de novo pyrimidine nucleotide biosynthesis pathway. The protein is Aspartate carbamoyltransferase catalytic subunit of Saccharopolyspora erythraea (strain ATCC 11635 / DSM 40517 / JCM 4748 / NBRC 13426 / NCIMB 8594 / NRRL 2338).